The chain runs to 370 residues: MVVPAAAAPECGRREAAAAAAAAVFCRRGRGVVVPTVDMSAPAGRGELSRQVARACAGSGFFRAVNHGVPPRVSAAMDAAAAAFFVRAGAEKQLAGPPDPLGYGSRSIGANGDVGELEYLILHASPDAVARKASAIDREDPRRFSQVVNDYVEAVRQLACHVLDLLGEGLGLRDPTSLTRLITATDNDSLIRINHYPPSCAAAAGDHKSGGGPAPTAAIGFGEHTDPQILSVLRANDADGLQLLLPDAAAAGDSVWVPVPPDPSAFFVNVGDLLQALTNGRLVSIRHRVVVGTGKPRLSTIYFAAPPLHARISALPETVAAGAPRRYRAFTWAEYKRTMYTLRLSHNRLDLFHAGDGDGDAGVGDDDDHE.

The region spanning 186-306 (DNDSLIRINH…RLSTIYFAAP (121 aa)) is the Fe2OG dioxygenase domain. Position 196 (Y196) interacts with 2-oxoglutarate. Residues H224, D226, and H287 each coordinate Fe cation. R297 and S299 together coordinate 2-oxoglutarate.

It belongs to the iron/ascorbate-dependent oxidoreductase family. GA2OX subfamily. Fe(2+) is required as a cofactor.

The catalysed reaction is gibberellin A1 + 2-oxoglutarate + O2 = gibberellin A8 + succinate + CO2. In terms of biological role, catalyzes the 2-beta-hydroxylation of several biologically active gibberellins, leading to the homeostatic regulation of their endogenous level. Catabolism of gibberellins (GAs) plays a central role in plant development. This Oryza sativa subsp. japonica (Rice) protein is Gibberellin 2-beta-dioxygenase 2.